Consider the following 104-residue polypeptide: Iron-sulfur cluster assembly protein CyaY (104 aa).

It belongs to the frataxin family.

In terms of biological role, involved in iron-sulfur (Fe-S) cluster assembly. May act as a regulator of Fe-S biogenesis. This is Iron-sulfur cluster assembly protein CyaY from Vibrio atlanticus (strain LGP32) (Vibrio splendidus (strain Mel32)).